Reading from the N-terminus, the 167-residue chain is MSSGIGSLVKVIFKNFDVIAGPVISLVYPLYASVRAIESRSHGDDKQWLTYWALYSLIKLFELTFFRLLEWIPLYPYAKLALTSWLVLPGMNGAAYLYEHYVRSFLLSPHTVNVWYVPAKKDDDLGATAGKFTPVNDSGAPQEKIVSSVDTSAKYVGHSAFDDAYIY.

3 consecutive transmembrane segments (helical) span residues 18 to 38 (VIAG…RAIE), 47 to 67 (QWLT…TFFR), and 68 to 88 (LLEW…WLVL).

Belongs to the DP1 family. Predominantly expressed in flower buds.

It localises to the membrane. In Arabidopsis thaliana (Mouse-ear cress), this protein is HVA22-like protein b (HVA22B).